The following is a 743-amino-acid chain: Phosphoribosylformylglycinamidine synthase subunit PurL (743 aa).

His50 is a catalytic residue. ATP contacts are provided by Tyr53 and Lys92. Glu94 lines the Mg(2+) pocket. Substrate is bound by residues 95–98 (SHNH) and Arg117. His96 (proton acceptor) is an active-site residue. Asp118 provides a ligand contact to Mg(2+). Position 241 (Gln241) interacts with substrate. Asp269 contributes to the Mg(2+) binding site. Residue 313 to 315 (ESQ) coordinates substrate. 2 residues coordinate ATP: Asp494 and Gly531. Asn532 contributes to the Mg(2+) binding site. Ser534 is a substrate binding site.

It belongs to the FGAMS family. In terms of assembly, monomer. Part of the FGAM synthase complex composed of 1 PurL, 1 PurQ and 2 PurS subunits.

It localises to the cytoplasm. The enzyme catalyses N(2)-formyl-N(1)-(5-phospho-beta-D-ribosyl)glycinamide + L-glutamine + ATP + H2O = 2-formamido-N(1)-(5-O-phospho-beta-D-ribosyl)acetamidine + L-glutamate + ADP + phosphate + H(+). It participates in purine metabolism; IMP biosynthesis via de novo pathway; 5-amino-1-(5-phospho-D-ribosyl)imidazole from N(2)-formyl-N(1)-(5-phospho-D-ribosyl)glycinamide: step 1/2. Functionally, part of the phosphoribosylformylglycinamidine synthase complex involved in the purines biosynthetic pathway. Catalyzes the ATP-dependent conversion of formylglycinamide ribonucleotide (FGAR) and glutamine to yield formylglycinamidine ribonucleotide (FGAM) and glutamate. The FGAM synthase complex is composed of three subunits. PurQ produces an ammonia molecule by converting glutamine to glutamate. PurL transfers the ammonia molecule to FGAR to form FGAM in an ATP-dependent manner. PurS interacts with PurQ and PurL and is thought to assist in the transfer of the ammonia molecule from PurQ to PurL. The protein is Phosphoribosylformylglycinamidine synthase subunit PurL of Sinorhizobium medicae (strain WSM419) (Ensifer medicae).